A 495-amino-acid chain; its full sequence is Carbohydrate oxidase (495 aa).

Residues Met1 to Arg22 form the signal peptide. Positions Leu55–Ala229 constitute an FAD-binding PCMH-type domain. The 6-(S-cysteinyl)-8alpha-(pros-histidyl)-FAD (His-Cys) cross-link spans His92 to Cys154. N-linked (GlcNAc...) asparagine glycans are attached at residues Asn244 and Asn417.

Belongs to the oxygen-dependent FAD-linked oxidoreductase family. FAD is required as a cofactor. In terms of processing, the FAD cofactor is bound via a bicovalent 6-S-cysteinyl, 8alpha-N1-histidyl FAD linkage.

The protein localises to the secreted. The enzyme catalyses beta-D-glucose + O2 = D-glucono-1,5-lactone + H2O2. It carries out the reaction D-galactose + O2 = D-galactono-1,5-lactone + H2O2. It catalyses the reaction D-cellobiose + O2 = D-cellobiono-1,5-lactone + H2O2. The catalysed reaction is beta-lactose + O2 = lactobiono-1,5-lactone + H2O2. The enzyme catalyses D-maltose + O2 = D-maltobiono-1,5-lactone + H2O2. It carries out the reaction D-xylose + O2 = D-xylono-1,5-lactone + H2O2. Catalyzes the selective oxidation of C1 hydroxyl moieties on mono-, oligo- and polysaccharides with concomitant reduction of molecular oxygen to hydrogen peroxide. This results in the formation of the corresponding lactones, which typically undergo spontaneous hydrolysis. Carbohydrate oxidase is able to oxidize a variety of substrates including D-glucose, D-galactose, D-xylose, D-maltose, D-cellobiose, and lactose. In addition, among various oligosaccharides, the enzyme preferred tetrameric dextrins, indicating a favorable interaction of four linked glucose units with the substrate binding pocket. In Microdochium nivale (Pink snow mold), this protein is Carbohydrate oxidase.